The primary structure comprises 567 residues: uncharacterized protein (567 aa).

A disordered region spans residues 1 to 26 (MPSEKATTRHLPGAVETLSPRTGRRP). 6 consecutive transmembrane segments (helical) span residues 57-77 (AILV…TVAF), 90-110 (VSFG…TYWL), 142-162 (VALA…IIYG), 173-193 (LFSM…LTEF), 221-241 (MLVW…TAIF), and 257-277 (VLIL…ILAW). Positions 277–329 (WLTATPVRVVREALNRVEQGDLSGDLVVFDGTELGELQRGFNRMVEGLRERER) constitute an HAMP domain. The 125-residue stretch at 361–485 (AVVFVDIVGS…EPVNEAARLC (125 aa)) folds into the Guanylate cyclase domain.

This sequence belongs to the adenylyl cyclase class-3 family.

It is found in the cell membrane. This is an uncharacterized protein from Mycobacterium bovis (strain ATCC BAA-935 / AF2122/97).